Consider the following 271-residue polypeptide: 5-amino-6-(5-phospho-D-ribitylamino)uracil phosphatase YbjI (271 aa).

The active-site Nucleophile is the Asp-9. Asp-9 lines the Mg(2+) pocket. Met-10 serves as a coordination point for phosphate. Mg(2+) is bound at residue Asp-11. Residues 44–45 (SG) and Lys-192 contribute to the phosphate site. Residue Asp-215 coordinates Mg(2+). Residue Asn-218 participates in phosphate binding.

Belongs to the HAD-like hydrolase superfamily. Cof family. Requires Mg(2+) as cofactor. Mn(2+) serves as cofactor. It depends on Co(2+) as a cofactor. Zn(2+) is required as a cofactor.

The enzyme catalyses 5-amino-6-(5-phospho-D-ribitylamino)uracil + H2O = 5-amino-6-(D-ribitylamino)uracil + phosphate. It participates in cofactor biosynthesis; riboflavin biosynthesis; 5-amino-6-(D-ribitylamino)uracil from GTP: step 4/4. In terms of biological role, catalyzes the dephosphorylation of 5-amino-6-(5-phospho-D-ribitylamino)uracil, and thus could be involved in the riboflavin biosynthesis pathway. Is also able to dephosphorylate flavin mononucleotide (FMN), erythrose 4-phosphate and other phosphoric acid esters. This is 5-amino-6-(5-phospho-D-ribitylamino)uracil phosphatase YbjI (ybjI) from Escherichia coli (strain K12).